The chain runs to 842 residues: Probable receptor-like protein kinase At5g61350 (842 aa).

The first 27 residues, 1 to 27 (MGGDFRHFSSHVSLLLLFLLIVKSSSS), serve as a signal peptide directing secretion. At 28-425 (FTPADNYLID…IGGMSSKKLA (398 aa)) the chain is on the extracellular side. N-linked (GlcNAc...) asparagine glycans are attached at residues N81, N125, N252, N294, N359, and N365. Residues 426 to 446 (IAGIGFVMALTAFLGVVVLLV) traverse the membrane as a helical segment. Residues 447–842 (RWQRRPKDWQ…EMQSPSHSIP (396 aa)) lie on the Cytoplasmic side of the membrane. Residues 525–803 (FDENAVCGVG…GDVLWNLEYA (279 aa)) form the Protein kinase domain. Residues 531-539 (CGVGGFGKV) and K553 contribute to the ATP site. D655 (proton acceptor) is an active-site residue.

The protein belongs to the protein kinase superfamily. Ser/Thr protein kinase family.

It localises to the membrane. The chain is Probable receptor-like protein kinase At5g61350 from Arabidopsis thaliana (Mouse-ear cress).